The following is a 393-amino-acid chain: Cysteine protease ATG4B (393 aa).

Residue C73 is the Nucleophile of the active site. Residues D278 and H280 contribute to the active site. Positions 388-391 match the LIR motif; the sequence is FEIL.

The protein belongs to the peptidase C54 family.

The protein localises to the cytoplasm. Its subcellular location is the cytosol. It localises to the cytoplasmic vesicle. The protein resides in the autophagosome. It is found in the endoplasmic reticulum. The protein localises to the mitochondrion. The catalysed reaction is [protein]-C-terminal L-amino acid-glycyl-phosphatidylethanolamide + H2O = [protein]-C-terminal L-amino acid-glycine + a 1,2-diacyl-sn-glycero-3-phosphoethanolamine. It carries out the reaction [protein]-C-terminal L-amino acid-glycyl-phosphatidylserine + H2O = [protein]-C-terminal L-amino acid-glycine + a 1,2-diacyl-sn-glycero-3-phospho-L-serine. Its function is as follows. Cysteine protease that plays a key role in autophagy by mediating both proteolytic activation and delipidation of ATG8 family proteins. Required for canonical autophagy (macroautophagy), non-canonical autophagy as well as for mitophagy. The protease activity is required for proteolytic activation of ATG8 family proteins: cleaves the C-terminal amino acid of ATG8 proteins to reveal a C-terminal glycine. Exposure of the glycine at the C-terminus is essential for ATG8 proteins conjugation to phosphatidylethanolamine (PE) and insertion to membranes, which is necessary for autophagy. Protease activity is also required to counteract formation of high-molecular weight conjugates of ATG8 proteins (ATG8ylation): acts as a deubiquitinating-like enzyme that removes ATG8 conjugated to other proteins, such as ATG3. In addition to the protease activity, also mediates delipidation of ATG8 family proteins. Catalyzes delipidation of PE-conjugated forms of ATG8 proteins during macroautophagy. Also involved in non-canonical autophagy, a parallel pathway involving conjugation of ATG8 proteins to single membranes at endolysosomal compartments, by catalyzing delipidation of ATG8 proteins conjugated to phosphatidylserine (PS). This Gallus gallus (Chicken) protein is Cysteine protease ATG4B.